The sequence spans 227 residues: Peptidyl-tRNA hydrolase (227 aa).

Tyrosine 14 is a tRNA binding site. Histidine 19 functions as the Proton acceptor in the catalytic mechanism. 3 residues coordinate tRNA: phenylalanine 64, asparagine 66, and asparagine 112. The segment at 182–227 (RIALLTQPPKPPKPPKPPKDGAKETAGKGTEAETAKPPGPAAGRTG) is disordered. The span at 198–215 (PPKDGAKETAGKGTEAET) shows a compositional bias: basic and acidic residues.

The protein belongs to the PTH family. Monomer.

It is found in the cytoplasm. The catalysed reaction is an N-acyl-L-alpha-aminoacyl-tRNA + H2O = an N-acyl-L-amino acid + a tRNA + H(+). Functionally, hydrolyzes ribosome-free peptidyl-tRNAs (with 1 or more amino acids incorporated), which drop off the ribosome during protein synthesis, or as a result of ribosome stalling. Catalyzes the release of premature peptidyl moieties from peptidyl-tRNA molecules trapped in stalled 50S ribosomal subunits, and thus maintains levels of free tRNAs and 50S ribosomes. The chain is Peptidyl-tRNA hydrolase from Rhodospirillum centenum (strain ATCC 51521 / SW).